The following is a 203-amino-acid chain: Small ribosomal subunit protein eS1 (203 aa).

This sequence belongs to the eukaryotic ribosomal protein eS1 family.

This Methanosarcina acetivorans (strain ATCC 35395 / DSM 2834 / JCM 12185 / C2A) protein is Small ribosomal subunit protein eS1.